The primary structure comprises 369 residues: GTPase Obg (369 aa).

The 158-residue stretch at 1-158 folds into the Obg domain; it reads MFTDVVELTV…RRIKLDLKLI (158 aa). A disordered region spans residues 126 to 146; the sequence is NTHFKSSTNQRPTYAQPGEKG. The segment covering 128–138 has biased composition (polar residues); the sequence is HFKSSTNQRPT. The region spanning 159-362 is the OBG-type G domain; the sequence is ADVGLVGFPN…LKHALFNLVQ (204 aa). GTP is bound by residues 165 to 172, 190 to 194, 212 to 215, 280 to 283, and 343 to 345; these read GFPNVGKS, FTTLT, DIPG, TRAD, and SSA. The Mg(2+) site is built by serine 172 and threonine 192.

This sequence belongs to the TRAFAC class OBG-HflX-like GTPase superfamily. OBG GTPase family. Monomer. Requires Mg(2+) as cofactor.

It localises to the cytoplasm. Its function is as follows. An essential GTPase which binds GTP, GDP and possibly (p)ppGpp with moderate affinity, with high nucleotide exchange rates and a fairly low GTP hydrolysis rate. Plays a role in control of the cell cycle, stress response, ribosome biogenesis and in those bacteria that undergo differentiation, in morphogenesis control. The polypeptide is GTPase Obg (Sulfurimonas denitrificans (strain ATCC 33889 / DSM 1251) (Thiomicrospira denitrificans (strain ATCC 33889 / DSM 1251))).